The chain runs to 561 residues: Putative transport protein YbjL (561 aa).

A run of 5 helical transmembrane segments spans residues 8–28, 32–52, 66–86, 94–114, and 158–178; these read LLNGNYILLLFVVLALGLCLG, LGSIQLGNSIGVLVVSLLLGQ, FMLFIFCVGVEAGPNFFSIFF, MLALVMVGSALVIALGLGKLF, and NLSLGYALTYLIGLVSLIVGA. RCK C-terminal domains follow at residues 200–288 and 292–373; these read RGLD…SFRN and VFDR…RIGF. 5 consecutive transmembrane segments (helical) span residues 383–403, 406–426, 451–471, 475–495, and 540–560; these read LLAFCAFFVIGLMIGMITFQF, FSFGMGNAAGLLFAGIMLGFM, VFMAGVGLSAGSGINNGLGAI, MLIAGLIVSLVPVVICFLFGA, and AIANVLLTLAGTIIVMVWPGL.

It belongs to the AAE transporter (TC 2.A.81) family. YbjL subfamily.

It localises to the cell membrane. This Shigella boydii serotype 4 (strain Sb227) protein is Putative transport protein YbjL.